The sequence spans 102 residues: Large ribosomal subunit protein eL31 (102 aa).

It belongs to the eukaryotic ribosomal protein eL31 family.

The chain is Large ribosomal subunit protein eL31 from Staphylothermus marinus (strain ATCC 43588 / DSM 3639 / JCM 9404 / F1).